A 490-amino-acid polypeptide reads, in one-letter code: GTPase Der (490 aa).

EngA-type G domains follow at residues 3-166 (PVIA…PRDE) and 196-369 (IKIA…KSAV). GTP is bound by residues 9 to 16 (GRPNVGKS), 56 to 60 (DTGGI), 118 to 121 (NKID), 202 to 209 (GRPNVGKS), 249 to 253 (DTAGV), and 314 to 317 (NKWD). A KH-like domain is found at 370 to 454 (TRWPTSRLTQ…PIRIEFKGGE (85 aa)). The tract at residues 452 to 490 (GGENPYEGNKNTLTDRQVNKKRRMMSHHKKADKKRRDKR) is disordered. A compositionally biased stretch (basic residues) spans 470–490 (NKKRRMMSHHKKADKKRRDKR).

Belongs to the TRAFAC class TrmE-Era-EngA-EngB-Septin-like GTPase superfamily. EngA (Der) GTPase family. In terms of assembly, associates with the 50S ribosomal subunit.

GTPase that plays an essential role in the late steps of ribosome biogenesis. The polypeptide is GTPase Der (Pseudomonas syringae pv. syringae (strain B728a)).